The chain runs to 520 residues: EGF domain-specific O-linked N-acetylglucosamine transferase (520 aa).

An N-terminal signal peptide occupies residues 1–16 (MPILPILIGILHLSLA). N52, N176, and N250 each carry an N-linked (GlcNAc...) asparagine glycan. Positions 292–294 (DVE) match the Required for optimal activity motif. N479 carries N-linked (GlcNAc...) asparagine glycosylation. Residues 517–520 (RNEL) carry the Prevents secretion from ER motif.

A divalent metal cation serves as cofactor.

Its subcellular location is the endoplasmic reticulum lumen. The catalysed reaction is L-seryl-[protein] + UDP-N-acetyl-alpha-D-glucosamine = 3-O-(N-acetyl-beta-D-glucosaminyl)-L-seryl-[protein] + UDP + H(+). It catalyses the reaction L-threonyl-[protein] + UDP-N-acetyl-alpha-D-glucosamine = 3-O-(N-acetyl-beta-D-glucosaminyl)-L-threonyl-[protein] + UDP + H(+). In terms of biological role, catalyzes the transfer of a single N-acetylglucosamine from UDP-GlcNAc to a serine or threonine residue in extracellular proteins resulting in their modification with a beta-linked N-acetylglucosamine (O-GlcNAc). Specifically glycosylates the Thr residue located between the fifth and sixth conserved cysteines of folded EGF-like domains. Involved in epithelial cell adhesion/interaction with the extracellular matrix by mediating glycosylation of proteins in the secretory pathway, such as Dumpy (Dp). This Drosophila melanogaster (Fruit fly) protein is EGF domain-specific O-linked N-acetylglucosamine transferase (Eogt).